A 161-amino-acid polypeptide reads, in one-letter code: SsrA-binding protein (161 aa).

A disordered region spans residues 138 to 161 (DKRTDSKEKDWNRDKARIMKSSLR). Basic and acidic residues predominate over residues 139–154 (KRTDSKEKDWNRDKAR).

It belongs to the SmpB family.

It is found in the cytoplasm. In terms of biological role, required for rescue of stalled ribosomes mediated by trans-translation. Binds to transfer-messenger RNA (tmRNA), required for stable association of tmRNA with ribosomes. tmRNA and SmpB together mimic tRNA shape, replacing the anticodon stem-loop with SmpB. tmRNA is encoded by the ssrA gene; the 2 termini fold to resemble tRNA(Ala) and it encodes a 'tag peptide', a short internal open reading frame. During trans-translation Ala-aminoacylated tmRNA acts like a tRNA, entering the A-site of stalled ribosomes, displacing the stalled mRNA. The ribosome then switches to translate the ORF on the tmRNA; the nascent peptide is terminated with the 'tag peptide' encoded by the tmRNA and targeted for degradation. The ribosome is freed to recommence translation, which seems to be the essential function of trans-translation. The protein is SsrA-binding protein of Aliivibrio fischeri (strain MJ11) (Vibrio fischeri).